Here is a 257-residue protein sequence, read N- to C-terminus: Pimeloyl-[acyl-carrier protein] methyl ester esterase (257 aa).

The AB hydrolase-1 domain occupies 16 to 242 (LVLLHGWGLN…AAHAPFISHP (227 aa)). Residues tryptophan 22, 82 to 83 (SL), and 143 to 147 (FLGLQ) each bind substrate. Residue serine 82 is the Nucleophile of the active site. Residues aspartate 207 and histidine 235 contribute to the active site. Histidine 235 lines the substrate pocket.

This sequence belongs to the AB hydrolase superfamily. Carboxylesterase BioH family. As to quaternary structure, monomer.

It is found in the cytoplasm. It catalyses the reaction 6-carboxyhexanoyl-[ACP] methyl ester + H2O = 6-carboxyhexanoyl-[ACP] + methanol + H(+). Its pathway is cofactor biosynthesis; biotin biosynthesis. Functionally, the physiological role of BioH is to remove the methyl group introduced by BioC when the pimeloyl moiety is complete. It allows to synthesize pimeloyl-ACP via the fatty acid synthetic pathway through the hydrolysis of the ester bonds of pimeloyl-ACP esters. This is Pimeloyl-[acyl-carrier protein] methyl ester esterase from Sodalis glossinidius (strain morsitans).